Consider the following 290-residue polypeptide: Endoplasmic reticulum-Golgi intermediate compartment protein 1 (290 aa).

Residues 1–26 lie on the Cytoplasmic side of the membrane; sequence MPFDFRRFDIYRKVPKDLTQPTYTGA. The chain crosses the membrane as a helical span at residues 27–47; the sequence is IISICCCLFITFLFLSELTGF. At 48–254 the chain is on the lumenal side; that stretch reads IANEIVNELY…RRQPMYRFIT (207 aa). The N-linked (GlcNAc...) asparagine glycan is linked to Asn-74. A helical membrane pass occupies residues 255 to 275; it reads TVCAIIGGTFTVAGILDSFIF. Over 276–290 the chain is Cytoplasmic; that stretch reads TASEAWKKIQLGKMQ.

The protein belongs to the ERGIC family.

The protein resides in the endoplasmic reticulum membrane. The protein localises to the endoplasmic reticulum-Golgi intermediate compartment membrane. It is found in the golgi apparatus membrane. Its function is as follows. Possible role in transport between endoplasmic reticulum and Golgi. This is Endoplasmic reticulum-Golgi intermediate compartment protein 1 (ergic1) from Xenopus laevis (African clawed frog).